We begin with the raw amino-acid sequence, 329 residues long: tRNA-modifying protein YgfZ (329 aa).

Folate-binding residues include Trp27 and Trp189.

It belongs to the tRNA-modifying YgfZ family.

It localises to the cytoplasm. Folate-binding protein involved in regulating the level of ATP-DnaA and in the modification of some tRNAs. It is probably a key factor in regulatory networks that act via tRNA modification, such as initiation of chromosomal replication. In Cronobacter sakazakii (strain ATCC BAA-894) (Enterobacter sakazakii), this protein is tRNA-modifying protein YgfZ.